Consider the following 2517-residue polypeptide: Cullin-9 (2517 aa).

K87 participates in a covalent cross-link: Glycyl lysine isopeptide (Lys-Gly) (interchain with G-Cter in ubiquitin). Residues 276–288 (SPELGAGDQSSPC) are compositionally biased toward polar residues. Residues 276–296 (SPELGAGDQSSPCATREKSRG) are disordered. Residues 366–439 (RSEFSSRSGY…HWHMLEILGP (74 aa)) enclose the CPH domain. Residues 576-589 (SNEPSSSSTSRNHS) show a composition bias toward low complexity. The tract at residues 576–639 (SNEPSSSSTS…TETPMAQSDS (64 aa)) is disordered. Residues 593-609 (DPEEESKSEASFSEEET) are compositionally biased toward acidic residues. Residues 610-630 (ESLKAKAEAPKTEAEPTKTRT) show a composition bias toward basic and acidic residues. A Phosphoserine modification is found at S976. The DOC domain occupies 1143 to 1322 (PINIPFFDVF…RTCLFYTIRA (180 aa)). 1363-1370 (AAQALGKT) serves as a coordination point for ATP. Disordered regions lie at residues 1432-1466 (VEPPPGPSPEPSTRPFSKNSKGRDRSPAPSPVLPS) and 1664-1685 (DEEEKRLEEEEEEEEEEEAEKE). Pro residues predominate over residues 1433 to 1443 (EPPPGPSPEPS). S1457 bears the Phosphoserine mark. The stretch at 1649–1691 (LFQLQRLDKLFLEQEDEEEKRLEEEEEEEEEEEAEKELFIEDP) forms a coiled coil. The span at 1664-1683 (DEEEKRLEEEEEEEEEEEAE) shows a compositional bias: acidic residues. A Glycyl lysine isopeptide (Lys-Gly) (interchain with G-Cter in NEDD8) cross-link involves residue K1881. The tract at residues 2066–2283 (RPDHCPVCVS…KDYYNCSAMV (218 aa)) is TRIAD supradomain. 18 residues coordinate Zn(2+): C2070, C2073, C2088, H2090, C2093, C2096, C2115, C2120, C2160, C2166, C2181, C2184, C2189, C2192, H2198, C2203, C2236, and C2239. The RING-type 1 zinc-finger motif lies at 2070-2120 (CPVCVSPLGCDDDLPSLCCMHYCCKSCWNEYLTTRIEQNLVLNCTCPIADC). The segment at 2140-2203 (SKYEKALLRG…FPEAHYPASC (64 aa)) adopts an IBR-type zinc-finger fold. The RING-type 2; atypical zinc-finger motif lies at 2236-2265 (CPSCQAPIEKNEGCLHMTCAKCNHGFCWRC). C2249 is an active-site residue. The Zn(2+) site is built by C2254, C2257, C2262, C2265, H2273, and C2279. Positions 2365–2385 (VEQQTENLELHTNALQILLEE) form a coiled coil. Phosphoserine is present on S2436. Positions 2442–2517 (WEAKGPNMPG…EEEDEDEAYD (76 aa)) are disordered. Acidic residues-rich tracts occupy residues 2461–2499 (EAEEEEEDDEDDVPEWQQDEFDEELDNDSFSYDESENLD) and 2506–2517 (GDEEEDEDEAYD).

The protein belongs to the cullin family. As to quaternary structure, component of the Cul9-RING complex consisting of CUL9 and RBX1; the CUL9-RBX1 complex is a heterododecamer composed of six CUL9 and six RBX1 protomers. Interacts (via C-terminal TRIAD/RBR supradomain) with E2 ubiquitin-conjugating enzyme UBE2L3. Interacts with CUL7; the interaction with the CUL7 component of the 3M complex leads to inhibition of CUL9 activity. The CUL7-CUL9 heterodimer seems to interact specifically with TP53, likely via the CPH domain. Forms a complex with p53/TP53 in the cytoplasm of unstressed cells. Interacts with UBCH7 and UBCH8. Post-translationally, autoubiquitinated by the CUL9-RBX1 complex at Lys-87. In terms of processing, neddylated. Neddylation is mediated by E1 enzyme UBA3-NAE1 complex and E2 enzyme UBE2F. Structural rearrangment of the C-terminal TRIAD/RBR supradomain may play a role in neddylation and deneddylation. As to expression, ubiquitously expressed in all tissues with highest expression in testis brain and kidney.

The protein resides in the cytoplasm. Its function is as follows. Core component of a Cul9-RING ubiquitin-protein ligase complex composed of CUL9 and RBX1. The CUL9-RBX1 complex mediates ubiquitination and subsequent degradation of BIRC5 and is required to maintain microtubule dynamics and genome integrity. Acts downstream of the 3M complex, which inhibits the ubiquitination of BIRC5. The CUL9-RBX1 complex also mediates mono-ubiquitination of p53/TP53. Acts as a cytoplasmic anchor protein in p53/TP53-associated protein complex. Regulates the subcellular localization of p53/TP53 and its subsequent function. Ubiquitinates apurinic/apyrimidinic endodeoxyribonuclease APEX2. Ubiquitination by the CUL9-RBX1 complex is predominantly mediated by E2 ubiquitin-conjugating enzymes UBE2L3 and UBE2D2. The protein is Cullin-9 (CUL9) of Homo sapiens (Human).